Here is a 385-residue protein sequence, read N- to C-terminus: Carbamoyl phosphate synthase small chain (385 aa).

The segment at 1 to 185 (MSEPAILVLA…LGKGFIEQTQ (185 aa)) is CPSase. Positions 47, 237, and 239 each coordinate L-glutamine. The 188-residue stretch at 189–376 (NVVAYDFGVK…INEMRKANLS (188 aa)) folds into the Glutamine amidotransferase type-1 domain. Cys265 functions as the Nucleophile in the catalytic mechanism. L-glutamine contacts are provided by Leu266, Gln269, Asn307, Gly309, and Phe310. Residues His349 and Glu351 contribute to the active site.

It belongs to the CarA family. In terms of assembly, composed of two chains; the small (or glutamine) chain promotes the hydrolysis of glutamine to ammonia, which is used by the large (or ammonia) chain to synthesize carbamoyl phosphate. Tetramer of heterodimers (alpha,beta)4.

It catalyses the reaction hydrogencarbonate + L-glutamine + 2 ATP + H2O = carbamoyl phosphate + L-glutamate + 2 ADP + phosphate + 2 H(+). The enzyme catalyses L-glutamine + H2O = L-glutamate + NH4(+). The protein operates within amino-acid biosynthesis; L-arginine biosynthesis; carbamoyl phosphate from bicarbonate: step 1/1. It functions in the pathway pyrimidine metabolism; UMP biosynthesis via de novo pathway; (S)-dihydroorotate from bicarbonate: step 1/3. Small subunit of the glutamine-dependent carbamoyl phosphate synthetase (CPSase). CPSase catalyzes the formation of carbamoyl phosphate from the ammonia moiety of glutamine, carbonate, and phosphate donated by ATP, constituting the first step of 2 biosynthetic pathways, one leading to arginine and/or urea and the other to pyrimidine nucleotides. The small subunit (glutamine amidotransferase) binds and cleaves glutamine to supply the large subunit with the substrate ammonia. This Pasteurella multocida (strain Pm70) protein is Carbamoyl phosphate synthase small chain.